The primary structure comprises 416 residues: Thioredoxin domain-containing protein 5 homolog (416 aa).

Residues 1 to 25 form the signal peptide; it reads MLTRSILSVAVCGLLLSPLLPITRA. Thioredoxin domains are found at residues 26–145, 150–272, and 293–412; these read SQEE…KELS, ADLG…KMVG, and AGEE…KFLG. 3 disulfides stabilise this stretch: C65–C68, C194–C197, and C331–C334. The Prevents secretion from ER motif lies at 413–416; the sequence is HDEL.

The protein belongs to the protein disulfide isomerase family.

The protein localises to the endoplasmic reticulum. It is found in the cell surface. Functionally, possesses thioredoxin activity. Acts as a ligand for Drpr and is required for the phagocytosis of apoptotic cells. Binds to the extracellular region of Drpr and augments Drpr tyrosine phosphorylation. The polypeptide is Thioredoxin domain-containing protein 5 homolog (Drosophila melanogaster (Fruit fly)).